The following is a 330-amino-acid chain: Aspartate--ammonia ligase (330 aa).

It belongs to the class-II aminoacyl-tRNA synthetase family. AsnA subfamily.

It localises to the cytoplasm. It carries out the reaction L-aspartate + NH4(+) + ATP = L-asparagine + AMP + diphosphate + H(+). Its pathway is amino-acid biosynthesis; L-asparagine biosynthesis; L-asparagine from L-aspartate (ammonia route): step 1/1. The polypeptide is Aspartate--ammonia ligase (Salmonella agona (strain SL483)).